Here is a 389-residue protein sequence, read N- to C-terminus: 23S rRNA (uracil(747)-C(5))-methyltransferase RlmC (389 aa).

[4Fe-4S] cluster is bound by residues Cys12, Cys20, Cys23, and Cys99. S-adenosyl-L-methionine contacts are provided by Gln224, Phe253, Glu274, and Asn321. Catalysis depends on Cys348, which acts as the Nucleophile.

The protein belongs to the class I-like SAM-binding methyltransferase superfamily. RNA M5U methyltransferase family. RlmC subfamily.

It carries out the reaction uridine(747) in 23S rRNA + S-adenosyl-L-methionine = 5-methyluridine(747) in 23S rRNA + S-adenosyl-L-homocysteine + H(+). In terms of biological role, catalyzes the formation of 5-methyl-uridine at position 747 (m5U747) in 23S rRNA. In Shewanella sp. (strain W3-18-1), this protein is 23S rRNA (uracil(747)-C(5))-methyltransferase RlmC.